We begin with the raw amino-acid sequence, 288 residues long: 2-methoxy-6-polyprenyl-1,4-benzoquinol methylase, mitochondrial (288 aa).

The transit peptide at 1–27 (MALRSVSRRLGSRILNQRSFVASLHSH) directs the protein to the mitochondrion. Residues Thr-94, Asp-130, and 160–161 (DA) each bind S-adenosyl-L-methionine.

Belongs to the class I-like SAM-binding methyltransferase superfamily. MenG/UbiE family. In terms of assembly, component of a multi-subunit COQ enzyme complex.

The protein resides in the mitochondrion inner membrane. It catalyses the reaction a 2-methoxy-6-(all-trans-polyprenyl)benzene-1,4-diol + S-adenosyl-L-methionine = a 5-methoxy-2-methyl-3-(all-trans-polyprenyl)benzene-1,4-diol + S-adenosyl-L-homocysteine + H(+). Its pathway is cofactor biosynthesis; ubiquinone biosynthesis. Its function is as follows. Methyltransferase required for the conversion of 2-polyprenyl-6-methoxy-1,4-benzoquinol (DDMQH2) to 2-polyprenyl-3-methyl-6-methoxy-1,4-benzoquinol (DMQH2). The polypeptide is 2-methoxy-6-polyprenyl-1,4-benzoquinol methylase, mitochondrial (Arabidopsis thaliana (Mouse-ear cress)).